The following is a 688-amino-acid chain: Phosphoinositide 3-phosphatase (688 aa).

One can recognise a Myotubularin phosphatase domain in the interval 155–637 (SWDIYDPIKE…KKVQWWWQLY (483 aa)). Residue Cys397 is the Phosphocysteine intermediate of the active site. The segment covering 647 to 668 (ELRHKRDSVPISVDKKSKEHSN) has biased composition (basic and acidic residues). Residues 647–672 (ELRHKRDSVPISVDKKSKEHSNSDGG) form a disordered region.

The protein belongs to the protein-tyrosine phosphatase family. Non-receptor class myotubularin subfamily.

The protein resides in the cytoplasm. The catalysed reaction is a 1,2-diacyl-sn-glycero-3-phospho-(1D-myo-inositol-3-phosphate) + H2O = a 1,2-diacyl-sn-glycero-3-phospho-(1D-myo-inositol) + phosphate. Functionally, lipid phosphatase which dephosphorylates phosphatidylinositol 3-monophosphate (PI3P). Involved in the control of PI3P-dependent signaling and in the maintenance of endosomal system integrity. In Saccharomyces cerevisiae (strain ATCC 204508 / S288c) (Baker's yeast), this protein is Phosphoinositide 3-phosphatase.